The chain runs to 321 residues: Glucokinase (321 aa).

Residue 8–13 participates in ATP binding; sequence GDVGGT.

It belongs to the bacterial glucokinase family.

Its subcellular location is the cytoplasm. The enzyme catalyses D-glucose + ATP = D-glucose 6-phosphate + ADP + H(+). This Pectobacterium atrosepticum (strain SCRI 1043 / ATCC BAA-672) (Erwinia carotovora subsp. atroseptica) protein is Glucokinase.